The sequence spans 229 residues: NAD-dependent protein deacetylase (229 aa).

In terms of domain architecture, Deacetylase sirtuin-type spans 1 to 229 (MNKLNEALKK…SDAVKVFAEI (229 aa)). NAD(+) contacts are provided by A20, R32, Q96, I98, D99, H114, T181, S182, N205, and V223. Nicotinamide is bound by residues I98 and D99. The Proton acceptor role is filled by H114.

The protein belongs to the sirtuin family. Class U subfamily.

It is found in the cytoplasm. It catalyses the reaction N(6)-acetyl-L-lysyl-[protein] + NAD(+) + H2O = 2''-O-acetyl-ADP-D-ribose + nicotinamide + L-lysyl-[protein]. NAD-dependent protein deacetylase which modulates the activities of several enzymes which are inactive in their acetylated form. This chain is NAD-dependent protein deacetylase, found in Listeria monocytogenes serotype 4b (strain F2365).